We begin with the raw amino-acid sequence, 76 residues long: Omega/kappa-hexatoxin-Ar1g (76 aa).

Positions 1–22 (MNTATGFIVLLVLATVLGGIEA) are cleaved as a signal peptide. Residues 23–35 (GESHMRKDAMGRV) constitute a propeptide that is removed on maturation. 3 disulfides stabilise this stretch: Cys-40-Cys-55, Cys-47-Cys-60, and Cys-54-Cys-74.

Belongs to the neurotoxin 08 (Shiva) family. 02 (omega/kappa toxin) subfamily. Expressed by the venom gland.

Its subcellular location is the secreted. Functionally, toxin that may inhibit ion channels. The sequence is that of Omega/kappa-hexatoxin-Ar1g from Atrax robustus (Sydney funnel-web spider).